Here is a 485-residue protein sequence, read N- to C-terminus: MNIFSGIEYKVLKDVNLDRKYDGIEYDSRKIKENYIFVAFEGANVDGHNYIDSAVKNGATCIIVSKKVEMKHNVSYILIDDIRHKLGYIASNFYEWPQRKLKIIGVTGTNGKTSSTYMIEKLMGDIPITRIGTIEYKIGDKVFEAVNTTPESLDLIKIFDKTLKKKIEYVIMEVSSHSLEIGRVEVLDFDYALFTNLTQDHLDYHLTMENYFQAKRKLFLKLKDINNSVINVDDEYGKRLYDEFIVDNPEIISYGIENGDLEGDYSDDGYIDVKYKNQIEKVKFSLLGDFNLYNTLGAIGIALKIGISMEEILKRVSNIKAAPGRFEALDCGQDYKVIVDYAHTPDALVNVIVAARNIKNGSRIITIFGCGGDRDRTKRPIMAKVAEDLSDVVILTSDNPRTESPEQIFDDVKKGFIKSDDYFFEPDREKAIKLAINMAEKNDIILITGKGHETYHIIGTKKWHFDDKEIARREIVRRKMVENVN.

A UDP-N-acetyl-alpha-D-muramoyl-L-alanyl-D-glutamate-binding site is contributed by Ser-28. An ATP-binding site is contributed by 108 to 114 (GTNGKTS). UDP-N-acetyl-alpha-D-muramoyl-L-alanyl-D-glutamate contacts are provided by residues Asn-147, 148–149 (TT), Ser-175, and Arg-183. An N6-carboxylysine modification is found at Lys-215. Meso-2,6-diaminopimelate contacts are provided by residues Arg-374, 398 to 401 (DNPR), Gly-449, and Glu-453. The Meso-diaminopimelate recognition motif motif lies at 398 to 401 (DNPR).

The protein belongs to the MurCDEF family. MurE subfamily. Mg(2+) is required as a cofactor. Post-translationally, carboxylation is probably crucial for Mg(2+) binding and, consequently, for the gamma-phosphate positioning of ATP.

The protein localises to the cytoplasm. It carries out the reaction UDP-N-acetyl-alpha-D-muramoyl-L-alanyl-D-glutamate + meso-2,6-diaminopimelate + ATP = UDP-N-acetyl-alpha-D-muramoyl-L-alanyl-gamma-D-glutamyl-meso-2,6-diaminopimelate + ADP + phosphate + H(+). It participates in cell wall biogenesis; peptidoglycan biosynthesis. Functionally, catalyzes the addition of meso-diaminopimelic acid to the nucleotide precursor UDP-N-acetylmuramoyl-L-alanyl-D-glutamate (UMAG) in the biosynthesis of bacterial cell-wall peptidoglycan. This is UDP-N-acetylmuramoyl-L-alanyl-D-glutamate--2,6-diaminopimelate ligase from Fusobacterium nucleatum subsp. nucleatum (strain ATCC 25586 / DSM 15643 / BCRC 10681 / CIP 101130 / JCM 8532 / KCTC 2640 / LMG 13131 / VPI 4355).